The sequence spans 377 residues: Flagellin D (377 aa).

Residues 104–128 (NSKADRVAIQEEVTALNDELNRIAE) are a coiled coil.

The protein belongs to the bacterial flagellin family. As to quaternary structure, heteromer of multiple flagellin subunits including FlaA, FlaB, FlaC, FlaD and possibly FlaE.

Its subcellular location is the secreted. The protein localises to the bacterial flagellum. Flagellin is the subunit protein which polymerizes to form the filaments of bacterial flagella. FlaD is not essential for flagellar synthesis and motility. May have a role in virulence unrelated to motility. The polypeptide is Flagellin D (flaD) (Vibrio anguillarum (Listonella anguillarum)).